The chain runs to 102 residues: Probable non-specific lipid-transfer protein (102 aa).

The signal sequence occupies residues 1 to 35 (MAMAMGMAMRKEAAVAVMMVMVVTLAAGADAGAGA). Cystine bridges form between Cys37/Cys71, Cys45/Cys59, Cys60/Cys95, and Cys69/Cys102.

This sequence belongs to the plant LTP family. B11E subfamily. As to expression, aleurone.

Its function is as follows. Potential phospholipid transfer protein. This is Probable non-specific lipid-transfer protein (LTP2) from Hordeum vulgare (Barley).